We begin with the raw amino-acid sequence, 86 residues long: Toxin 3FTx-Dis4 (86 aa).

The signal sequence occupies residues 1–19 (MKTLLLSLVMVGFMYLVSG). 3 disulfides stabilise this stretch: Cys-24–Cys-45, Cys-38–Cys-63, and Cys-79–Cys-84.

Belongs to the three-finger toxin family. Ancestral subfamily. Expressed by the venom gland.

It localises to the secreted. In Dispholidus typus (Boomslang), this protein is Toxin 3FTx-Dis4.